A 196-amino-acid chain; its full sequence is Translation machinery-associated protein 22 (196 aa).

An SUI1 domain is found at 111-182 (IIIKRIERNK…EAKEYIEKLL (72 aa)).

It belongs to the DENR family. In terms of assembly, interacts with the 40S ribosomal subunit.

The protein resides in the cytoplasm. The chain is Translation machinery-associated protein 22 (TMA22) from Lodderomyces elongisporus (strain ATCC 11503 / CBS 2605 / JCM 1781 / NBRC 1676 / NRRL YB-4239) (Yeast).